Here is a 220-residue protein sequence, read N- to C-terminus: Ribosomal RNA large subunit methyltransferase E (220 aa).

The S-adenosyl-L-methionine site is built by Gly-64, Trp-66, Asp-92, Asp-108, and Asp-133. The active-site Proton acceptor is Lys-173.

The protein belongs to the class I-like SAM-binding methyltransferase superfamily. RNA methyltransferase RlmE family.

Its subcellular location is the cytoplasm. The catalysed reaction is uridine(2552) in 23S rRNA + S-adenosyl-L-methionine = 2'-O-methyluridine(2552) in 23S rRNA + S-adenosyl-L-homocysteine + H(+). In terms of biological role, specifically methylates the uridine in position 2552 of 23S rRNA at the 2'-O position of the ribose in the fully assembled 50S ribosomal subunit. The sequence is that of Ribosomal RNA large subunit methyltransferase E from Acidovorax sp. (strain JS42).